Reading from the N-terminus, the 239-residue chain is Ribosomal RNA small subunit methyltransferase G (239 aa).

Residues G78, F83, 129-130 (AE), and R148 contribute to the S-adenosyl-L-methionine site.

It belongs to the methyltransferase superfamily. RNA methyltransferase RsmG family.

It localises to the cytoplasm. Specifically methylates the N7 position of a guanine in 16S rRNA. In Clostridium botulinum (strain Loch Maree / Type A3), this protein is Ribosomal RNA small subunit methyltransferase G.